Consider the following 442-residue polypeptide: tRNA-2-methylthio-N(6)-dimethylallyladenosine synthase (442 aa).

The MTTase N-terminal domain maps to 5-122 (KKVFIKTLGC…LPEMIKQKQK (118 aa)). C14, C51, C85, C159, C163, and C166 together coordinate [4Fe-4S] cluster. In terms of domain architecture, Radical SAM core spans 145-378 (KAEGAKAYVS…DLLNSNAQII (234 aa)). The 63-residue stretch at 380 to 442 (RQMVGTNQRI…LPNSLRGELI (63 aa)) folds into the TRAM domain.

This sequence belongs to the methylthiotransferase family. MiaB subfamily. Monomer. [4Fe-4S] cluster is required as a cofactor.

The protein localises to the cytoplasm. It catalyses the reaction N(6)-dimethylallyladenosine(37) in tRNA + (sulfur carrier)-SH + AH2 + 2 S-adenosyl-L-methionine = 2-methylsulfanyl-N(6)-dimethylallyladenosine(37) in tRNA + (sulfur carrier)-H + 5'-deoxyadenosine + L-methionine + A + S-adenosyl-L-homocysteine + 2 H(+). Functionally, catalyzes the methylthiolation of N6-(dimethylallyl)adenosine (i(6)A), leading to the formation of 2-methylthio-N6-(dimethylallyl)adenosine (ms(2)i(6)A) at position 37 in tRNAs that read codons beginning with uridine. In Francisella tularensis subsp. holarctica (strain LVS), this protein is tRNA-2-methylthio-N(6)-dimethylallyladenosine synthase.